The sequence spans 122 residues: Putative iron-sulfur cluster insertion protein ErpA (122 aa).

Cys50, Cys114, and Cys116 together coordinate iron-sulfur cluster.

It belongs to the HesB/IscA family. Homodimer. Iron-sulfur cluster serves as cofactor.

Functionally, required for insertion of 4Fe-4S clusters. This Cupriavidus metallidurans (strain ATCC 43123 / DSM 2839 / NBRC 102507 / CH34) (Ralstonia metallidurans) protein is Putative iron-sulfur cluster insertion protein ErpA.